The sequence spans 215 residues: Adenylate kinase (215 aa).

An ATP-binding site is contributed by 10 to 15 (GAGKGT). The tract at residues 30-59 (STGDMLREAVAAGTELGKKVKEIIEKGLLV) is NMP. AMP-binding positions include threonine 31, arginine 36, 57–59 (LLV), 85–88 (GFPR), and glutamine 92. The LID stretch occupies residues 126-163 (SRRVCPSCGKVYNLLTIKPKNDMLCDDCNIGLIQREDD). Arginine 127 lines the ATP pocket. Residues cysteine 130 and cysteine 133 each coordinate Zn(2+). An ATP-binding site is contributed by 136–137 (VY). Zn(2+)-binding residues include cysteine 150 and cysteine 153. Residues arginine 160 and arginine 171 each coordinate AMP. Leucine 199 is an ATP binding site.

The protein belongs to the adenylate kinase family. As to quaternary structure, monomer.

It localises to the cytoplasm. The catalysed reaction is AMP + ATP = 2 ADP. The protein operates within purine metabolism; AMP biosynthesis via salvage pathway; AMP from ADP: step 1/1. In terms of biological role, catalyzes the reversible transfer of the terminal phosphate group between ATP and AMP. Plays an important role in cellular energy homeostasis and in adenine nucleotide metabolism. The protein is Adenylate kinase of Kosmotoga olearia (strain ATCC BAA-1733 / DSM 21960 / TBF 19.5.1).